Reading from the N-terminus, the 182-residue chain is Large ribosomal subunit protein uL6 (182 aa).

It belongs to the universal ribosomal protein uL6 family. In terms of assembly, part of the 50S ribosomal subunit.

This protein binds to the 23S rRNA, and is important in its secondary structure. It is located near the subunit interface in the base of the L7/L12 stalk, and near the tRNA binding site of the peptidyltransferase center. The chain is Large ribosomal subunit protein uL6 from Carboxydothermus hydrogenoformans (strain ATCC BAA-161 / DSM 6008 / Z-2901).